Consider the following 225-residue polypeptide: MHAIVAVKSLRSAKSRLAGELDADARADLVLAMLHDTLATVAAVSAIDTVTVVTPDPTVAALAYSVGVTVYADPAPHISLTNGASPRAEETLNAALSAAAADIRAKRGVVDLVVLQADLPAMQPSELTEAVAAARSGGRSVVVDHHGTGTSALFACGESALDPRFGPESARGHANSGARPLNGQWPGLRTDVDTHADLDTVRALGVGPATLASLTRLKATPSNSR.

3 residues coordinate phosphoenolpyruvate: Thr-150, Gly-166, and Ser-169. Positions 167-186 (PESARGHANSGARPLNGQWP) are disordered.

This sequence belongs to the CofC family.

It catalyses the reaction phosphoenolpyruvate + GTP + H(+) = enolpyruvoyl-2-diphospho-5'-guanosine + diphosphate. Its pathway is cofactor biosynthesis; coenzyme F420 biosynthesis. In terms of biological role, guanylyltransferase that catalyzes the activation of phosphoenolpyruvate (PEP) as enolpyruvoyl-2-diphospho-5'-guanosine, via the condensation of PEP with GTP. It is involved in the biosynthesis of coenzyme F420, a hydride carrier cofactor. This is Phosphoenolpyruvate guanylyltransferase from Rhodococcus erythropolis (strain PR4 / NBRC 100887).